Reading from the N-terminus, the 248-residue chain is Probable transcriptional regulatory protein Mpop_0922 (248 aa).

It belongs to the TACO1 family.

The protein localises to the cytoplasm. The protein is Probable transcriptional regulatory protein Mpop_0922 of Methylorubrum populi (strain ATCC BAA-705 / NCIMB 13946 / BJ001) (Methylobacterium populi).